The primary structure comprises 1606 residues: E3 ubiquitin-protein ligase HECW1 (1606 aa).

A C2 domain is found at 182–318 (SAAPIFKSIG…LERHAIGDRV (137 aa)). Disordered regions lie at residues 349 to 418 (DDEE…PAEE), 459 to 538 (AEQL…CSLP), 566 to 672 (LLHS…SCEG), and 730 to 815 (STVF…SQLP). The span at 354 to 373 (SLSTEPESAQIQDSPMNNLM) shows a compositional bias: polar residues. Over residues 380 to 392 (PRSEAPESSESWK) the composition is skewed to basic and acidic residues. Composition is skewed to acidic residues over residues 500–511 (EEEEKEQEEEGD) and 579–588 (AEEEDGAEEE). The span at 589–600 (STLKDSSEKDGL) shows a compositional bias: basic and acidic residues. Acidic residues predominate over residues 612-621 (ALEEDREEPE). Polar residues-rich tracts occupy residues 651–663 (HPSTGSESDSSPR), 751–765 (DSMQSPELDPESTNG), and 806–815 (HNSQPVSQLP). Positions 829–862 (EPLPPNWEARIDSHGRVFYVDHVNRTTTWQRPTA) constitute a WW 1 domain. A coiled-coil region spans residues 870–901 (RRSGSIQQMEQLNRRYQNIQRTIATERSEEDS). A phosphoserine mark is found at Ser-874, Ser-937, and Ser-939. The interval 894 to 938 (TERSEEDSGSQSCEQAPAGGGGGGGSDSEAESSQSSLDLRREGSL) is disordered. Residues 1018–1051 (LELPRGWEIKTDQQGKSFFVDHNSRATTFIDPRI) form the WW 2 domain. The 336-residue stretch at 1271–1606 (SRKELQRNKL…VEETSTFGLE (336 aa)) folds into the HECT domain. Cys-1574 (glycyl thioester intermediate) is an active-site residue.

In terms of assembly, interacts with DVL1 and SSR3. Also interacts with mutant SOD1. As to expression, predominantly expressed in neurons of adult and fetal brain. Weakly expressed in the kidney.

Its subcellular location is the cytoplasm. The catalysed reaction is S-ubiquitinyl-[E2 ubiquitin-conjugating enzyme]-L-cysteine + [acceptor protein]-L-lysine = [E2 ubiquitin-conjugating enzyme]-L-cysteine + N(6)-ubiquitinyl-[acceptor protein]-L-lysine.. The protein operates within protein modification; protein ubiquitination. E3 ubiquitin-protein ligase that mediates ubiquitination and subsequent degradation of DVL1. Also targets the mutant SOD1 protein involved in familial amyotrophic lateral sclerosis (FALS). Forms cytotoxic aggregates with DVL1, SSR3 and mutant SOD1 that lead to motor neuron death in FALS. The chain is E3 ubiquitin-protein ligase HECW1 (HECW1) from Homo sapiens (Human).